The sequence spans 162 residues: F protein (162 aa).

The tract at residues 1–23 (MSTNPKPQKKKTNVTPTVAHRTS) is disordered. Over residues 13-23 (NVTPTVAHRTS) the composition is skewed to polar residues.

Its subcellular location is the host cytoplasm. It localises to the host perinuclear region. This chain is F protein, found in Hepatitis C virus genotype 1a (isolate 1) (HCV).